Consider the following 750-residue polypeptide: GTP pyrophosphokinase rsh (750 aa).

One can recognise an HD domain in the interval 45 to 144 (YFSHPLEVAA…VKLADRLHNM (100 aa)). The TGS domain maps to 390–451 (DQVFCFTPKG…KNGDEVDIIR (62 aa)). Residues 587–613 (AAKVDPAATTPKPGKRALPIRGTNPDL) form a disordered region. The region spanning 676–750 (RISVSAINSP…SVSSAKRVNG (75 aa)) is the ACT domain.

This sequence belongs to the RelA/SpoT family.

It catalyses the reaction GTP + ATP = guanosine 3'-diphosphate 5'-triphosphate + AMP. Its function is as follows. Functions as a (p)ppGpp synthase. In eubacteria ppGpp (guanosine 3'-diphosphate 5'-diphosphate) is a mediator of the stringent response that coordinates a variety of cellular activities in response to changes in nutritional abundance. Plays a role in adaptation of Brucella to its intracellular host environment. The polypeptide is GTP pyrophosphokinase rsh (rsh) (Brucella abortus (strain 2308)).